Here is a 197-residue protein sequence, read N- to C-terminus: Imidazoleglycerol-phosphate dehydratase (197 aa).

It belongs to the imidazoleglycerol-phosphate dehydratase family.

It localises to the cytoplasm. The enzyme catalyses D-erythro-1-(imidazol-4-yl)glycerol 3-phosphate = 3-(imidazol-4-yl)-2-oxopropyl phosphate + H2O. Its pathway is amino-acid biosynthesis; L-histidine biosynthesis; L-histidine from 5-phospho-alpha-D-ribose 1-diphosphate: step 6/9. This is Imidazoleglycerol-phosphate dehydratase from Chromobacterium violaceum (strain ATCC 12472 / DSM 30191 / JCM 1249 / CCUG 213 / NBRC 12614 / NCIMB 9131 / NCTC 9757 / MK).